Here is a 587-residue protein sequence, read N- to C-terminus: Arginine--tRNA ligase (587 aa).

A 'HIGH' region motif is present at residues 127–137; it reads PNLAKEMHVGH.

This sequence belongs to the class-I aminoacyl-tRNA synthetase family. Monomer.

Its subcellular location is the cytoplasm. It carries out the reaction tRNA(Arg) + L-arginine + ATP = L-arginyl-tRNA(Arg) + AMP + diphosphate. The protein is Arginine--tRNA ligase of Pseudomonas aeruginosa (strain UCBPP-PA14).